We begin with the raw amino-acid sequence, 343 residues long: Probable dual-specificity RNA methyltransferase RlmN (343 aa).

Glu-90 serves as the catalytic Proton acceptor. Positions 96–325 constitute a Radical SAM core domain; sequence HEGYATACIS…AEIRYEKGAD (230 aa). A disulfide bond links Cys-103 and Cys-330. The [4Fe-4S] cluster site is built by Cys-110, Cys-114, and Cys-117. S-adenosyl-L-methionine contacts are provided by residues 157–158, Ser-189, 212–214, and Asn-288; these read GE and SLH. Residue Cys-330 is the S-methylcysteine intermediate of the active site.

Belongs to the radical SAM superfamily. RlmN family. [4Fe-4S] cluster is required as a cofactor.

It localises to the cytoplasm. The enzyme catalyses adenosine(2503) in 23S rRNA + 2 reduced [2Fe-2S]-[ferredoxin] + 2 S-adenosyl-L-methionine = 2-methyladenosine(2503) in 23S rRNA + 5'-deoxyadenosine + L-methionine + 2 oxidized [2Fe-2S]-[ferredoxin] + S-adenosyl-L-homocysteine. The catalysed reaction is adenosine(37) in tRNA + 2 reduced [2Fe-2S]-[ferredoxin] + 2 S-adenosyl-L-methionine = 2-methyladenosine(37) in tRNA + 5'-deoxyadenosine + L-methionine + 2 oxidized [2Fe-2S]-[ferredoxin] + S-adenosyl-L-homocysteine. Functionally, specifically methylates position 2 of adenine 2503 in 23S rRNA and position 2 of adenine 37 in tRNAs. The sequence is that of Probable dual-specificity RNA methyltransferase RlmN from Pseudothermotoga lettingae (strain ATCC BAA-301 / DSM 14385 / NBRC 107922 / TMO) (Thermotoga lettingae).